Here is a 196-residue protein sequence, read N- to C-terminus: Acyl-homoserine-lactone synthase (196 aa).

It belongs to the autoinducer synthase family.

It carries out the reaction a fatty acyl-[ACP] + S-adenosyl-L-methionine = an N-acyl-L-homoserine lactone + S-methyl-5'-thioadenosine + holo-[ACP] + H(+). Its function is as follows. Required for the synthesis of a yet unknown N-aceyl-homoserine lactone (N-aceyl-HSL), an autoinducer molecule which binds to PhzR and thus regulates phenazine production. This chain is Acyl-homoserine-lactone synthase (phzI), found in Pseudomonas fluorescens.